The following is a 396-amino-acid chain: Mannonate dehydratase (396 aa).

It belongs to the mannonate dehydratase family. The cofactor is Fe(2+). Mn(2+) serves as cofactor.

The enzyme catalyses D-mannonate = 2-dehydro-3-deoxy-D-gluconate + H2O. It participates in carbohydrate metabolism; pentose and glucuronate interconversion. Functionally, catalyzes the dehydration of D-mannonate. This is Mannonate dehydratase from Yersinia enterocolitica serotype O:8 / biotype 1B (strain NCTC 13174 / 8081).